The following is a 293-amino-acid chain: Movement protein BC1 (293 aa).

It belongs to the begomovirus movement protein BC1 family. In terms of assembly, binds to dimeric supercoiled plasmid DNA. In terms of processing, phosphorylated.

It is found in the host cell membrane. The protein localises to the host microsome membrane. Its subcellular location is the host endoplasmic reticulum membrane. Its function is as follows. Transports viral genome to neighboring plant cells directly through plasmosdesmata, without any budding. The movement protein allows efficient cell to cell propagation, by bypassing the host cell wall barrier. Begomovirus genome is shuttled out of nucleus by Nuclear shuttle protein (NSP) and the movement protein transports the DNA-NSP complex to cell plasmodesmata and facilitates further movement across the cell wall. The protein is Movement protein BC1 of Macroptilium lathyroides (Lima bean).